Here is a 248-residue protein sequence, read N- to C-terminus: B-box zinc finger protein 24 (248 aa).

Positions 5, 8, 28, 33, 57, 60, 80, and 85 each coordinate Zn(2+). The B box-type 1; atypical zinc-finger motif lies at 5–47; sequence CDVCEKAPATVICCADEAALCPQCDIEIHAANKLASKHQRLHL. The segment at 57 to 99 adopts a B box-type 2; atypical zinc-finger fold; that stretch reads CDICQEKAAFIFCVEDRALLCRDCDESIHVANSRSANHQRFLA. Positions 115-148 are disordered; the sequence is IEKNQPEPSNNQQKANQIPAKSTSQQQQQPSSAT. Residues 120–130 show a composition bias toward polar residues; it reads PEPSNNQQKAN. Over residues 131 to 148 the composition is skewed to low complexity; that stretch reads QIPAKSTSQQQQQPSSAT. The short motif at 226-229 is the Nuclear localization signal element; it reads KKPR. The segment at 236 to 248 is interaction with COP1; it reads DDDEEHFIVPDLG.

Interacts with COP1 WD40 domain. Interacts with HY5 and HYH. Interacts with RCD1 and TRP4. In terms of processing, COP1-mediated ubiquitination and subsequent proteasomal degradation of BBX24/STO occurs in the dark. High expression in leaves and lower in roots and flowers.

The protein resides in the nucleus. In terms of biological role, acts as a negative regulator of seedling photomorphogenesis and light-regulated inhibition of hypocotyl elongation. BBX24/STO and BBX25/STH function as transcriptional corepressors of HY5 activity, leading to the down-regulation of BBX22 expression. BBX24/STO acts additively with BBX25/STH during de-etiolation and the hypocotyl shade avoidance response. Functions as a negative regulator of photomorphogenic UV-B responses by interacting with both COP1 and HY5. May act as a transcription factor in the salt-stress response. This Arabidopsis thaliana (Mouse-ear cress) protein is B-box zinc finger protein 24.